Consider the following 757-residue polypeptide: Mitofusin-2 (757 aa).

At methionine 1–valine 604 the chain is on the cytoplasmic side. The interval lysine 30 to arginine 94 is part of a helix bundle domain, formed by helices from N-terminal and C-terminal regions. A Dynamin-type G domain is found at alanine 93–glutamate 342. Residues glycine 103–serine 110 are G1 motif. Serine 106–threonine 111 lines the GTP pocket. The residue at position 111 (threonine 111) is a Phosphothreonine; by PINK1. Residues threonine 129 to threonine 130 form a G2 motif region. Positions aspartate 199–glycine 202 are G3 motif. Asparagine 258 to aspartate 261 is a GTP binding site. A G4 motif region spans residues asparagine 258–aspartate 261. A region of interest (G5 motif) is located at residue glutamate 288. GTP contacts are provided by serine 305 and lysine 307. The tract at residues glutamate 359–glutamate 385 is part of a helix bundle domain, formed by helices from N-terminal and C-terminal regions. Positions glutamate 391–methionine 434 form a coiled coil. Residue serine 442 is modified to Phosphoserine; by PINK1. The chain crosses the membrane as a helical span at residues threonine 605–valine 625. Residue tryptophan 626 is a topological domain, mitochondrial intermembrane. Residues lysine 627 to tyrosine 647 form a helical membrane-spanning segment. At glutamate 648 to arginine 757 the chain is on the cytoplasmic side. Residues threonine 695–alanine 738 are a coiled coil. The interval glutamate 722–leucine 753 is part of a helix bundle domain, formed by helices from N-terminal and C-terminal regions.

The protein belongs to the TRAFAC class dynamin-like GTPase superfamily. Dynamin/Fzo/YdjA family. Mitofusin subfamily. In terms of assembly, forms homomultimers and heteromultimers with MFN1. Oligomerization is essential for mitochondrion fusion. Interacts with VAT1. Interacts with STOML2; may form heterooligomers. Interacts (phosphorylated) with PRKN. Interacts with EIF2AK3. Interacts with THG1L; THG1L probably functions as a guanyl-nucleotide exchange factor/GEF, activating MFN2. Phosphorylated by PINK1. Post-translationally, ubiquitinated by non-degradative ubiquitin by PRKN, promoting mitochondrial fusion; deubiquitination by USP30 inhibits mitochondrial fusion. Ubiquitinated by HUWE1 when dietary stearate (C18:0) levels are low; ubiquitination inhibits mitochondrial fusion. Ubiquitous; expressed at low level. Highly expressed in heart and kidney.

It localises to the mitochondrion outer membrane. The catalysed reaction is GTP + H2O = GDP + phosphate + H(+). In terms of biological role, mitochondrial outer membrane GTPase that mediates mitochondrial clustering and fusion. Mitochondria are highly dynamic organelles, and their morphology is determined by the equilibrium between mitochondrial fusion and fission events. Overexpression induces the formation of mitochondrial networks. Membrane clustering requires GTPase activity and may involve a major rearrangement of the coiled coil domains. Plays a central role in mitochondrial metabolism and may be associated with obesity and/or apoptosis processes. Plays an important role in the regulation of vascular smooth muscle cell proliferation. Involved in the clearance of damaged mitochondria via selective autophagy (mitophagy). Is required for PRKN recruitment to dysfunctional mitochondria. Involved in the control of unfolded protein response (UPR) upon ER stress including activation of apoptosis and autophagy during ER stress. Acts as an upstream regulator of EIF2AK3 and suppresses EIF2AK3 activation under basal conditions. This Homo sapiens (Human) protein is Mitofusin-2.